The chain runs to 2324 residues: Acetyl-CoA carboxylase (2324 aa).

Met-1 is modified (N-acetylmethionine). The tract at residues 1 to 34 (MEESSQPAKPLEMNPHSRFIIGSVSEDNSEDETS) is disordered. A phosphoserine mark is found at Ser-78 and Ser-80. The Biotin carboxylation domain maps to 117 to 618 (VIEKVLIANN…DTGWLDRLIA (502 aa)). Residues 275 to 466 (QKRILNVPQE…LPAAQLQIAM (192 aa)) form the ATP-grasp domain. An ATP-binding site is contributed by 315-320 (GGGGKG). Residues Glu-424, Glu-437, and Asn-439 each coordinate Mn(2+). The active site involves Arg-441. In terms of domain architecture, Biotinyl-binding spans 745–819 (FEKENDPSIL…DPGCVIAKLQ (75 aa)). Lys-786 carries the post-translational modification N6-biotinyllysine. Position 1193 is a phosphoserine (Ser-1193). The region spanning 1553 to 1891 (PYVTKDLLQS…SVYSPVPILK (339 aa)) is the CoA carboxyltransferase N-terminal domain. Residues 1553–2211 (PYVTKDLLQS…EDVVKKKIHD (659 aa)) are carboxyltransferase. Positions 1800, 2104, and 2106 each coordinate CoA. The CoA carboxyltransferase C-terminal domain occupies 1895-2211 (PIDRTIDFVP…EDVVKKKIHD (317 aa)).

It depends on biotin as a cofactor. Requires Mn(2+) as cofactor.

Its subcellular location is the cytoplasm. It carries out the reaction hydrogencarbonate + acetyl-CoA + ATP = malonyl-CoA + ADP + phosphate + H(+). It catalyses the reaction N(6)-biotinyl-L-lysyl-[protein] + hydrogencarbonate + ATP = N(6)-carboxybiotinyl-L-lysyl-[protein] + ADP + phosphate + H(+). The protein operates within lipid metabolism; malonyl-CoA biosynthesis; malonyl-CoA from acetyl-CoA: step 1/1. Its activity is regulated as follows. By phosphorylation. Its function is as follows. Catalyzes the rate-limiting reaction in the biogenesis of long-chain fatty acids. Carries out three functions: biotin carboxyl carrier protein, biotin carboxylase and carboxyltransferase. The polypeptide is Acetyl-CoA carboxylase (ACAC) (Gallus gallus (Chicken)).